Here is a 217-residue protein sequence, read N- to C-terminus: Uracil-DNA glycosylase (217 aa).

The active-site Proton acceptor is aspartate 62.

The protein belongs to the uracil-DNA glycosylase (UDG) superfamily. UNG family.

It localises to the cytoplasm. It catalyses the reaction Hydrolyzes single-stranded DNA or mismatched double-stranded DNA and polynucleotides, releasing free uracil.. Its function is as follows. Excises uracil residues from the DNA which can arise as a result of misincorporation of dUMP residues by DNA polymerase or due to deamination of cytosine. This is Uracil-DNA glycosylase from Streptococcus pneumoniae (strain JJA).